The following is a 217-amino-acid chain: Probable cutinase 3 (217 aa).

A signal peptide spans 1–17 (MSLRSLFVAGLATLALA). 2 cysteine pairs are disulfide-bonded: Cys39-Cys118 and Cys65-Cys79. Ser129 acts as the Nucleophile in catalysis. Residues Cys180 and Cys187 are joined by a disulfide bond. Asp184 is an active-site residue. The Proton donor/acceptor role is filled by His197.

The protein belongs to the cutinase family.

The protein resides in the secreted. The enzyme catalyses cutin + H2O = cutin monomers.. In terms of biological role, catalyzes the hydrolysis of complex carboxylic polyesters found in the cell wall of plants. Degrades cutin, a macromolecule that forms the structure of the plant cuticle. The sequence is that of Probable cutinase 3 from Aspergillus fumigatus (strain CBS 144.89 / FGSC A1163 / CEA10) (Neosartorya fumigata).